A 692-amino-acid chain; its full sequence is Pentatricopeptide repeat-containing protein At2g04860 (692 aa).

17 PPR repeats span residues 12-46, 47-83, 84-114, 115-149, 150-184, 185-215, 216-250, 280-314, 316-345, 346-380, 381-411, 412-447, 448-482, 483-513, 514-548, 549-584, and 585-615; these read DLSY…SLTP, NHFT…GLDR, FVYV…MPER, DTVV…GFSP, SATT…GLEL, DSQV…MKDK, STVS…NVEI, DISV…SIVG, TSIV…CMKI, DAVA…GLCT, KTLV…LQET, PLIS…GLLP, DAIT…NFEN, ENFV…IKAP, CTAT…GLKP, DEIT…GISP, and TLQH…MDIK. The segment at 620–692 is type E motif; degenerate; that stretch reads VWGALLSACI…YDGYLGVSQI (73 aa).

The protein belongs to the PPR family. PCMP-E subfamily.

The sequence is that of Pentatricopeptide repeat-containing protein At2g04860 (PCMP-E74) from Arabidopsis thaliana (Mouse-ear cress).